Here is a 166-residue protein sequence, read N- to C-terminus: Large ribosomal subunit protein uL10 (166 aa).

It belongs to the universal ribosomal protein uL10 family. Part of the ribosomal stalk of the 50S ribosomal subunit. The N-terminus interacts with L11 and the large rRNA to form the base of the stalk. The C-terminus forms an elongated spine to which L12 dimers bind in a sequential fashion forming a multimeric L10(L12)X complex.

Forms part of the ribosomal stalk, playing a central role in the interaction of the ribosome with GTP-bound translation factors. The sequence is that of Large ribosomal subunit protein uL10 from Lactobacillus johnsonii (strain CNCM I-12250 / La1 / NCC 533).